Consider the following 62-residue polypeptide: Guanine nucleotide-binding protein subunit gamma (62 aa).

Positions Asp-40–Leu-62 are disordered. Residues Phe-53–Leu-62 show a composition bias toward basic and acidic residues. At Cys-59 the chain carries Cysteine methyl ester. Cys-59 carries the S-geranylgeranyl cysteine lipid modification. Residues Ser-60–Leu-62 constitute a propeptide, removed in mature form.

It belongs to the G protein gamma family. G proteins are composed of 3 units, alpha, beta and gamma. Interacts with gpb-1 and gpb-2. In terms of tissue distribution, predominantly expressed in the central nervous system.

It localises to the cell membrane. Functionally, guanine nucleotide-binding proteins (G proteins) are involved as a modulator or transducer in various transmembrane signaling systems. The beta and gamma chains are required for the GTPase activity, for replacement of GDP by GTP, and for G protein-effector interaction. This chain is Guanine nucleotide-binding protein subunit gamma (gpc-1), found in Caenorhabditis elegans.